Consider the following 117-residue polypeptide: Large ribosomal subunit protein uL18 (117 aa).

The protein belongs to the universal ribosomal protein uL18 family. Part of the 50S ribosomal subunit; part of the 5S rRNA/L5/L18/L25 subcomplex. Contacts the 5S and 23S rRNAs.

In terms of biological role, this is one of the proteins that bind and probably mediate the attachment of the 5S RNA into the large ribosomal subunit, where it forms part of the central protuberance. The polypeptide is Large ribosomal subunit protein uL18 (Francisella tularensis subsp. tularensis (strain FSC 198)).